Consider the following 358-residue polypeptide: UPF0324 membrane protein CT0845 (358 aa).

10 helical membrane passes run 36-53 (YFPGVLASITVAAAATFL), 57-76 (YGAPTMLFALLIGMAFRFLS), 83-105 (LVGIQFASTTVLRIGVALLGMRI), 115-134 (VKPVVMVFFSVLLTILFGLA), 146-168 (GVLTGGSVGICGASAALAIAAVL), 178-200 (TIFTVISITALSTLAMIAYPVVA), 244-261 (LLRVSMLVPVVFILSLIF), 276-295 (LLPPFIIFFVLFVGINSLGV), 307-325 (VSRWCLVTAIGALGMKTSL), and 335-357 (PVSIMIAETVFLAVLVLGSVVWM).

This sequence belongs to the UPF0324 family.

It localises to the cell membrane. The polypeptide is UPF0324 membrane protein CT0845 (Chlorobaculum tepidum (strain ATCC 49652 / DSM 12025 / NBRC 103806 / TLS) (Chlorobium tepidum)).